The sequence spans 1337 residues: Phosphoribosylformylglycinamidine synthase (1337 aa).

S215 bears the Phosphoserine mark. ATP contacts are provided by residues 322-333 (GATTGTGGRIRD) and 402-404 (AGF). Phosphothreonine occurs at positions 619 and 622. Residue A705 coordinates ATP. D706, E745, N749, and D908 together coordinate Mg(2+). ATP is bound at residue S910. The Glutamine amidotransferase type-1 domain occupies 1063–1301 (RVAILREEGS…ALMPHPERAV (239 aa)). Residue C1157 is the Nucleophile of the active site. Residues H1296 and E1298 contribute to the active site.

It in the N-terminal section; belongs to the FGAMS family.

Its subcellular location is the cytoplasm. It catalyses the reaction N(2)-formyl-N(1)-(5-phospho-beta-D-ribosyl)glycinamide + L-glutamine + ATP + H2O = 2-formamido-N(1)-(5-O-phospho-beta-D-ribosyl)acetamidine + L-glutamate + ADP + phosphate + H(+). Its pathway is purine metabolism; IMP biosynthesis via de novo pathway; 5-amino-1-(5-phospho-D-ribosyl)imidazole from N(2)-formyl-N(1)-(5-phospho-D-ribosyl)glycinamide: step 1/2. Phosphoribosylformylglycinamidine synthase involved in the purines biosynthetic pathway. Catalyzes the ATP-dependent conversion of formylglycinamide ribonucleotide (FGAR) and glutamine to yield formylglycinamidine ribonucleotide (FGAM) and glutamate. The protein is Phosphoribosylformylglycinamidine synthase (Pfas) of Mus musculus (Mouse).